Consider the following 86-residue polypeptide: Anti-adapter protein IraP (86 aa).

Residues 1-47 (MKNLIAELLLKLAQKEEESKELVAQVEALEIIVTAMLRNMAQSEQQM) adopt a coiled-coil conformation.

It belongs to the IraP family. In terms of assembly, interacts with RssB.

It localises to the cytoplasm. Functionally, inhibits RpoS proteolysis by regulating RssB activity, thereby increasing the stability of the sigma stress factor RpoS especially during phosphate and magnesium starvation, but also in stationary phase and during nitrogen starvation. Its effect on RpoS stability is due to its interaction with RssB, which probably blocks the interaction of RssB with RpoS, and the consequent delivery of the RssB-RpoS complex to the ClpXP protein degradation pathway. The polypeptide is Anti-adapter protein IraP (Salmonella arizonae (strain ATCC BAA-731 / CDC346-86 / RSK2980)).